Here is a 73-residue protein sequence, read N- to C-terminus: DNA-binding protein S1FA3 (73 aa).

A Nuclear localization signal motif is present at residues 47-52; that stretch reads PPRKKK. Residues 47–63 are compositionally biased toward basic residues; that stretch reads PPRKKKPVSKKKMKKEK. The tract at residues 47–73 is disordered; that stretch reads PPRKKKPVSKKKMKKEKMKQGVQVPGE.

Belongs to the S1FA transcription factor family.

It is found in the nucleus. In terms of biological role, DNA-binding protein that specifically recognizes a negative element (S1F) within the RPS1 promoter. The chain is DNA-binding protein S1FA3 (S1FA3) from Arabidopsis thaliana (Mouse-ear cress).